The following is a 220-amino-acid chain: MKIDILDKGFVELVDVMGNDLSAVRAARVSFDMGLKDEERDRHLIEYLMKHGHETPFEHIVFTFHVKAPIFVARQWFRHRIASYNELSGRYSKLSYEFYIPSPERLEGYKTTIPPEQVTEKISEIVDKAYRTYLELIESGVPREVARIVLPLNLYTRFFWTVNARSLMNFLNLRADSHAQWEIQQYALAIARIFKEKCPWTFEAFLKYAYKGDILKEVQV.

The ThyX domain maps to 1 to 208 (MKIDILDKGF…PWTFEAFLKY (208 aa)). FAD contacts are provided by residues threonine 55, 78 to 80 (RHR), and glutamate 86. DUMP is bound by residues 75–78 (QWFR), 86–90 (ELSGR), and arginine 147. The ThyX motif motif lies at 78-88 (RHRIASYNELS). FAD contacts are provided by residues 163–165 (NAR) and asparagine 169. Arginine 174 contributes to the dUMP binding site. Arginine 174 (involved in ionization of N3 of dUMP, leading to its activation) is an active-site residue.

The protein belongs to the thymidylate synthase ThyX family. Homotetramer. FAD is required as a cofactor.

It catalyses the reaction dUMP + (6R)-5,10-methylene-5,6,7,8-tetrahydrofolate + NADPH + H(+) = dTMP + (6S)-5,6,7,8-tetrahydrofolate + NADP(+). It functions in the pathway pyrimidine metabolism; dTTP biosynthesis. Functionally, catalyzes the reductive methylation of 2'-deoxyuridine-5'-monophosphate (dUMP) to 2'-deoxythymidine-5'-monophosphate (dTMP) while utilizing 5,10-methylenetetrahydrofolate (mTHF) as the methyl donor, and NADPH and FADH(2) as the reductant. This chain is Flavin-dependent thymidylate synthase, found in Thermotoga petrophila (strain ATCC BAA-488 / DSM 13995 / JCM 10881 / RKU-1).